A 225-amino-acid chain; its full sequence is UPF0758 protein BCQ_4241 (225 aa).

The MPN domain maps to 103 to 225; the sequence is SIRSPEDCAR…FVSLKEKGHI (123 aa). Residues H174, H176, and D187 each coordinate Zn(2+). A JAMM motif motif is present at residues 174-187; that stretch reads HNHPSGDPAPSRED.

The protein belongs to the UPF0758 family.

This Bacillus cereus (strain Q1) protein is UPF0758 protein BCQ_4241.